The following is a 144-amino-acid chain: Large ribosomal subunit protein uL16 (144 aa).

This sequence belongs to the universal ribosomal protein uL16 family. As to quaternary structure, part of the 50S ribosomal subunit.

Functionally, binds 23S rRNA and is also seen to make contacts with the A and possibly P site tRNAs. In Bacillus cereus (strain ATCC 10987 / NRS 248), this protein is Large ribosomal subunit protein uL16.